The following is a 341-amino-acid chain: Phenylalanine--tRNA ligase alpha subunit (341 aa).

A Mg(2+)-binding site is contributed by E256.

Belongs to the class-II aminoacyl-tRNA synthetase family. Phe-tRNA synthetase alpha subunit type 1 subfamily. As to quaternary structure, tetramer of two alpha and two beta subunits. Requires Mg(2+) as cofactor.

The protein resides in the cytoplasm. It carries out the reaction tRNA(Phe) + L-phenylalanine + ATP = L-phenylalanyl-tRNA(Phe) + AMP + diphosphate + H(+). This chain is Phenylalanine--tRNA ligase alpha subunit, found in Clostridium perfringens (strain 13 / Type A).